A 386-amino-acid chain; its full sequence is Putative matrix metalloproteinase (386 aa).

Residues 1 to 34 form the signal peptide; that stretch reads MPTAHFQHSIRYLNVTNMLIFSIISFLLIYQTNS. 2 N-linked (GlcNAc...) asparagine; by host glycosylation sites follow: Asn-14 and Asn-58. His-186 provides a ligand contact to Zn(2+). The active site involves Glu-187. The Zn(2+) site is built by His-190 and His-196. Positions 235–258 are disordered; it reads NEQSTHQSTRHRPHRRPSPDGSCR.

It belongs to the peptidase M10A family. It depends on Zn(2+) as a cofactor.

This chain is Putative matrix metalloproteinase, found in Spodoptera frugiperda (Fall armyworm).